The following is a 223-amino-acid chain: Translation initiation factor 6 (223 aa).

It belongs to the eIF-6 family. In terms of assembly, associates with the 50S ribosomal subunit, specifically with protein L14. Binds to 23S rRNA, possibly between where the 30S and 50S subunits associate to initiate translation. Post-translationally, modified in an unknown fashion (not phosphorylation) following release from 50S ribosomal subunits.

In terms of biological role, binds to the 50S ribosomal subunit and prevents its association with the 30S ribosomal subunit to form the 70S initiation complex. Inhibits translation of both leadered and leaderless mRNAs, maybe by binding to the 50S ribosome subunit, preventing it from binding to the 30S subunit. The polypeptide is Translation initiation factor 6 (Saccharolobus solfataricus (strain ATCC 35092 / DSM 1617 / JCM 11322 / P2) (Sulfolobus solfataricus)).